A 476-amino-acid chain; its full sequence is 1-aminocyclopropane-1-carboxylate synthase 4 (476 aa).

Lysine 282 bears the N6-(pyridoxal phosphate)lysine mark.

It belongs to the class-I pyridoxal-phosphate-dependent aminotransferase family. In terms of assembly, homodimer. Requires pyridoxal 5'-phosphate as cofactor.

The catalysed reaction is S-adenosyl-L-methionine = 1-aminocyclopropane-1-carboxylate + S-methyl-5'-thioadenosine + H(+). It participates in alkene biosynthesis; ethylene biosynthesis via S-adenosyl-L-methionine; ethylene from S-adenosyl-L-methionine: step 1/2. Functionally, catalyzes the formation of 1-aminocyclopropane-1-carboxylate, a direct precursor of ethylene in higher plants. The sequence is that of 1-aminocyclopropane-1-carboxylate synthase 4 (ACS4) from Solanum lycopersicum (Tomato).